The sequence spans 230 residues: MDPDAVKSTLSNLAFGNVMAAAARNYQKEVLANEKAQGSNPVNEEVDLDELMDDPELERLHADRIAALKREVEKRESFKRQGHGEYREVSEGDFLGEVTRSEKVICHFYHKEFYRCKIMDKHLKTLAPRHVDTKFIKVDAENAPFFVTKLAIKTLPCVVLFSKGVAMDRLVGFQDLGTKDDFTTNKLENVLLKKGMLSKKKKEEDDEDAEYQESIRRSVRSSENLDSDSD.

The Thioredoxin domain maps to valine 89–phenylalanine 173. The interval leucine 197–aspartate 230 is disordered.

Belongs to the phosducin family. As to quaternary structure, interacts with TUBB2, TUBB3, TUBB4 and TUBB5. In terms of tissue distribution, expressed in embryos, shoot meristems, leaf primordia, root meristems, floral meristems and young floral buds.

Its subcellular location is the cytoplasm. It is found in the nucleus. In terms of biological role, tubulin-binding protein involved in microtubule formation. The sequence is that of Thioredoxin domain-containing protein PLP3A (PLP3A) from Arabidopsis thaliana (Mouse-ear cress).